The primary structure comprises 68 residues: Pantinin-3 (68 aa).

The signal sequence occupies residues 1-23; that stretch reads MKTQFAILLIALVLFQLLSQSDA. Leu36 is modified (leucine amide). Positions 40–68 are excised as a propeptide; the sequence is GLNELDNLDELFDGEISQADIDFLKELMS.

Belongs to the non-disulfide-bridged peptide (NDBP) superfamily. Short antimicrobial peptide (group 4) family. In terms of tissue distribution, expressed by the venom gland.

The protein resides in the secreted. It is found in the target cell membrane. Its function is as follows. Amphipathic peptide that possesses relatively strong activities against Gram-positive bacteria and a fungus, but has very weak antimicrobial activities against Gram-negative bacteria. Also exhibits mild hemolytic activities against human erythrocytes (16 uM induce 70% of hemolysis). Furthermore, this peptide potently inhibits the growth of vancomycin-resistant Enterococcus (VRE) S13, a pathogen that can cause a number of human infections. Minimal inhibitory concentration (MIC) are the following: 16 uM against S.aureus, 6 uM against B.magaterium, 8 uM against M.luteus, 4 uM against VRE, 12 uM against methicillin-resistant S.aureus, 36 uM against E.coli, &gt;87 uM against P.putida, 87 uM against K.oxytoca, &gt;87 uM against E.cloacae, 84 uM against S.enterica and 17 uM against the fungus C.tropicalis. In Pandinus imperator (Emperor scorpion), this protein is Pantinin-3.